Here is a 177-residue protein sequence, read N- to C-terminus: Protein PrsK (177 aa).

The N-terminal stretch at 1 to 21 is a signal peptide; it reads MIKSTGALLLFAALSAGQAMA.

Its subcellular location is the fimbrium. The polypeptide is Protein PrsK (prsK) (Escherichia coli).